The following is a 359-amino-acid chain: Peptide chain release factor 1 (359 aa).

At Q235 the chain carries N5-methylglutamine.

Belongs to the prokaryotic/mitochondrial release factor family. In terms of processing, methylated by PrmC. Methylation increases the termination efficiency of RF1.

The protein localises to the cytoplasm. Peptide chain release factor 1 directs the termination of translation in response to the peptide chain termination codons UAG and UAA. This chain is Peptide chain release factor 1, found in Methylibium petroleiphilum (strain ATCC BAA-1232 / LMG 22953 / PM1).